We begin with the raw amino-acid sequence, 653 residues long: Sulfate transporter 1.2 (653 aa).

A disordered region spans residues Met1–Val30. At Met1–Arg91 the chain is on the cytoplasmic side. Residues Gly92–Ala112 traverse the membrane as a helical segment. The Extracellular segment spans residues Lys113–Asn116. The helical transmembrane segment at Leu117 to Gly137 threads the bilayer. At Ser138 to Asp141 the chain is on the cytoplasmic side. A helical transmembrane segment spans residues Ile142 to Ile162. At Asp163–Arg173 the chain is on the extracellular side. Helical transmembrane passes span Leu174–Leu194 and Gly195–Ile215. The Extracellular segment spans residues Thr216–Asn253. The chain crosses the membrane as a helical span at residues Trp254–Gly274. Residues Lys275–Leu280 lie on the Cytoplasmic side of the membrane. Residues Phe281 to Ile301 traverse the membrane as a helical segment. The Extracellular portion of the chain corresponds to Thr302–Arg339. Residues Ile340–Ala360 traverse the membrane as a helical segment. Residues Ala361–Glu372 are Cytoplasmic-facing. Residues Met373–Gly393 form a helical membrane-spanning segment. Topologically, residues Ser394–Ala409 are extracellular. The chain crosses the membrane as a helical span at residues Val410–Phe430. The Cytoplasmic portion of the chain corresponds to Lys431 to Leu438. A helical transmembrane segment spans residues Ala439–Phe459. At Lys460–Phe466 the chain is on the extracellular side. Residues Ile467–Ile487 form a helical membrane-spanning segment. Residues Ala488 to Val653 are Cytoplasmic-facing. The STAS domain occupies Gln522–Cys645.

Belongs to the SLC26A/SulP transporter (TC 2.A.53.1) family. As to quaternary structure, homodimer. Interacts with OASA1 through its STAS domain. As to expression, expressed in lateral root cap, root hairs, epidermal and cortical cells of roots.

It localises to the cell membrane. With respect to regulation, interaction with OASA1 negatively impacts the transporter activity. Functionally, high-affinity H(+)/sulfate cotransporter that mediates the uptake of the environmental sulfate by plant roots. Plays a central role in the regulation of sulfate assimilation. Unable to transport molybdate. The sequence is that of Sulfate transporter 1.2 (SULTR1;2) from Arabidopsis thaliana (Mouse-ear cress).